Reading from the N-terminus, the 387-residue chain is Putative ankyrin repeat protein RBE_0984 (387 aa).

ANK repeat units follow at residues 50-79 (YGNTPLSLALNKKLEAVCEVLVSRMSDKDI), 88-119 (HRETYFTLAAIKGFKGVCENLAPRMSNEAINV), 123-154 (RKHTALTLAADKNLPQVCIKLIPIMFDEVINV), 159-188 (HKDSALRKAIWNDLDVVCQMLIPVTSKENI), and 210-239 (VCKMLISRMIEDNSLDIINHVISKGELKGE). Coiled-coil stretches lie at residues 251–278 (FEDICELLQKSHEEYKEQKQKENEKKCE) and 311–352 (SISA…ALEK).

This Rickettsia bellii (strain RML369-C) protein is Putative ankyrin repeat protein RBE_0984.